We begin with the raw amino-acid sequence, 157 residues long: Cyclic pyranopterin monophosphate synthase (157 aa).

Substrate-binding positions include 74–76 (MCH) and 112–113 (ME). The active site involves Asp127.

The protein belongs to the MoaC family. As to quaternary structure, homohexamer; trimer of dimers.

It carries out the reaction (8S)-3',8-cyclo-7,8-dihydroguanosine 5'-triphosphate = cyclic pyranopterin phosphate + diphosphate. The protein operates within cofactor biosynthesis; molybdopterin biosynthesis. Catalyzes the conversion of (8S)-3',8-cyclo-7,8-dihydroguanosine 5'-triphosphate to cyclic pyranopterin monophosphate (cPMP). This is Cyclic pyranopterin monophosphate synthase from Campylobacter jejuni subsp. jejuni serotype O:6 (strain 81116 / NCTC 11828).